Reading from the N-terminus, the 149-residue chain is UPF0756 membrane protein Nther_1957 (149 aa).

Helical transmembrane passes span 5 to 25 (IVVL…LVAT), 52 to 72 (LGIL…DIMP), 85 to 105 (LIAV…VELL), and 111 to 131 (VMVG…GVPA).

The protein belongs to the UPF0756 family.

The protein localises to the cell membrane. The protein is UPF0756 membrane protein Nther_1957 of Natranaerobius thermophilus (strain ATCC BAA-1301 / DSM 18059 / JW/NM-WN-LF).